Here is a 228-residue protein sequence, read N- to C-terminus: MPKLILCRHGQSVWNAENLFTGWADVDLSEQGENEAITSGKKLKAQGIEIDIVYTSLLERAIKTTYHLLNESNQLFIPIIKSWRLNERHYGGLQGLNKDDARKKFGEDQVHIWRRSYDVAPPKQDEAQRESYLNDRKYEHLDRRVMPESESLKDTLVRVIPYWNDQISQQLLDGKTVLVSAHGNSLRALIKYLENVSDEDIVGYEIKTGAPLIYELTDDLQVIDKYYL.

Residues 8–15 (RHGQSVWN), 21–22 (TG), R60, 87–90 (ERHY), K98, 114–115 (RR), and 183–184 (GN) each bind substrate. The Tele-phosphohistidine intermediate role is filled by H9. The active-site Proton donor/acceptor is the E87.

The protein belongs to the phosphoglycerate mutase family. BPG-dependent PGAM subfamily.

The catalysed reaction is (2R)-2-phosphoglycerate = (2R)-3-phosphoglycerate. It functions in the pathway carbohydrate degradation; glycolysis; pyruvate from D-glyceraldehyde 3-phosphate: step 3/5. Its function is as follows. Catalyzes the interconversion of 2-phosphoglycerate and 3-phosphoglycerate. This Staphylococcus saprophyticus subsp. saprophyticus (strain ATCC 15305 / DSM 20229 / NCIMB 8711 / NCTC 7292 / S-41) protein is 2,3-bisphosphoglycerate-dependent phosphoglycerate mutase.